The following is a 388-amino-acid chain: Sex-determination protein fem-3 (388 aa).

Tandem repeats lie at residues 7–10 (SDDV), 110–113 (ITRF), 141–144 (ITRF), 234–237 (YHTT), 284–287 (YHTT), and 371–374 (SDDV).

As to quaternary structure, component of a complex containing fem-1, fem-2 and fem-3. Interacts with fem-1 and fem-2 (via N-terminus). Part of a E3 ubiquitin-protein ligase complex, at least composed of cul-2, elc-1, tra-1, fem-1, fem-2 and fem-3; mediates the ubiquitination and subsequent proteasomal degradation of tra-1. Interacts with tra-1. Interacts with sel-10. Interacts with tra-2.

Functionally, required for male development. In XO (male) animals, fem-3 directs male differentiation in all tissues. In XX (hermaphrodite) animals, it specifies the first 80 or so germ cells to be sperm. Negatively regulates male development when bound to tra-2. Together with fem-2 associates with the CBC(fem-1) E3 ubiquitin-protein ligase complex which mediates the ubiquitination and subsequent proteasomal degradation of tra-1. This chain is Sex-determination protein fem-3 (fem-3), found in Caenorhabditis elegans.